The sequence spans 244 residues: Probable histone-lysine N-methyltransferase set-23 (244 aa).

One can recognise a Pre-SET domain in the interval 25–86; the sequence is EGCNCEAECS…SCRNRVVQCG (62 aa). C27, C29, C33, C39, C41, C65, C69, C71, and C78 together coordinate Zn(2+). The 125-residue stretch at 89–213 folds into the SET domain; that stretch reads KKLEIFSTCE…RGEELCYDYG (125 aa). S-adenosyl-L-methionine contacts are provided by residues 101 to 103, D141, Y143, R170, and 173 to 174; these read KGF and NH. Positions 176, 225, 227, and 232 each coordinate Zn(2+). The Post-SET domain occupies 221–237; sequence NRKLCLCKSEKCRKYLP.

The protein belongs to the class V-like SAM-binding methyltransferase superfamily. Histone-lysine methyltransferase family. Suvar3-9 subfamily.

Its subcellular location is the nucleus. The protein localises to the chromosome. It catalyses the reaction L-lysyl-[histone] + S-adenosyl-L-methionine = N(6)-methyl-L-lysyl-[histone] + S-adenosyl-L-homocysteine + H(+). Its function is as follows. Probable histone methyltransferase. Required for embryonic development. In Caenorhabditis elegans, this protein is Probable histone-lysine N-methyltransferase set-23 (set-23).